The primary structure comprises 30 residues: Toxic protein AapA1 (30 aa).

Belongs to the AapA toxin family.

The protein localises to the cell inner membrane. Transcription of the aapA1 gene generates a full-length transcript whose folding impedes translation. Processing of the 3' end of the aapA1 message generates a shorter transcript that becomes translatable after a structural rearrangement. The processing also makes it more susceptible to forming dsRNA with IsoA1 which leads to duplex RNA degradation by RNase 3 (rnc). Its function is as follows. May be involved in response to oxidative stress. Toxic component of a type I toxin-antitoxin (TA) system. When overexpression is induced in situ in the absence of its cognate antisense RNA antitoxin IsoA1 it leads to cell growth arrest and cell death without lysis. Neutralized by IsoA1 RNA which forms an extensive duplex with the mRNA. Binds artificial prokaryotic and eukaryotic lipid membranes, with 30-fold higher affinity for prokaryotic membranes. Molecular dynamics suggests the peptide penetrates the membrane leading to lipid reorganization and thinning of the bilayer. Induction of toxin in the absence of antitoxin RNA causes a fast conversion of cells from spiral-shaped to coccoid forms; cells have no visible membrane defects and resemble wild-type 'aging coccoids'. Toxin causes a moderate decrease in membrane potential and ATP content and alterations in peptidoglycan muropeptide abundance; GlcNAc-MurNAc dipeptides increase while GlcNAc-MurNAc tripeptides decrease (i.e. a faster phenocopy of cell aging). Deletion of all 6 AapA/IsoA TA loci in strain B128 leads to slower than wild-type conversion of H2O2-treated cells to the coccoid form. This suggests oxidative stress triggers coccoid transformation via these type I TA systems, although other factors eventually drive the morphology change. The sequence is that of Toxic protein AapA1 from Helicobacter pylori (strain ATCC 700392 / 26695) (Campylobacter pylori).